The primary structure comprises 512 residues: Activin receptor type-2B (512 aa).

The signal sequence occupies residues 1–24; that stretch reads MSASWLTLAVLCATLGAGPGHGEA. Topologically, residues 25–137 are extracellular; the sequence is ETRECIYYNA…PPPPTPSLLN (113 aa). Disulfide bonds link Cys29-Cys59, Cys49-Cys77, Cys84-Cys103, Cys90-Cys102, and Cys104-Cys109. Residues Asn42 and Asn65 are each glycosylated (N-linked (GlcNAc...) asparagine). A helical transmembrane segment spans residues 138 to 158; it reads ILVYSLLPIAVLSVAILLAFW. Over 159-512 the chain is Cytoplasmic; that stretch reads MYRHRKPPYG…VDLPPKESSI (354 aa). One can recognise a Protein kinase domain in the interval 190 to 478; sequence LQLLEIKARG…LSAGCVEERI (289 aa). ATP is bound by residues 196-204 and Lys217; that span reads KARGRFGCV. Asp321 (proton acceptor) is an active-site residue.

The protein belongs to the protein kinase superfamily. TKL Ser/Thr protein kinase family. TGFB receptor subfamily. Mg(2+) serves as cofactor. Requires Mn(2+) as cofactor. In terms of tissue distribution, not expressed in hen anterior pituitary during the ovulatory cycle but expressed in the ovarian follicle.

Its subcellular location is the membrane. It carries out the reaction L-threonyl-[receptor-protein] + ATP = O-phospho-L-threonyl-[receptor-protein] + ADP + H(+). The enzyme catalyses L-seryl-[receptor-protein] + ATP = O-phospho-L-seryl-[receptor-protein] + ADP + H(+). Functionally, on ligand binding, forms a receptor complex consisting of two type II and two type I transmembrane serine/threonine kinases. Type II receptors phosphorylate and activate type I receptors which autophosphorylate, then bind and activate SMAD transcriptional regulators. Receptor for activin A, activin B and inhibin A. May modulate neuropeptide expression in dorsal root ganglia (DRG) neurons and ovarian follicle development. The sequence is that of Activin receptor type-2B (ACVR2B) from Gallus gallus (Chicken).